The primary structure comprises 392 residues: Putative nicotinate phosphoribosyltransferase (392 aa).

Nicotinate-binding residues include tyrosine 21, phenylalanine 138, and threonine 179. Histidine 182 bears the Phosphohistidine mark. A nicotinate-binding site is contributed by arginine 235. 5-phospho-alpha-D-ribose 1-diphosphate-binding residues include serine 240, glycine 272, and threonine 293. Cysteine 330, cysteine 333, cysteine 348, and cysteine 350 together coordinate Zn(2+).

It belongs to the NAPRTase family. Highly divergent. As to quaternary structure, homodimer. Forms a trimer of dimers in the crystal. Transiently phosphorylated on a His residue during the reaction cycle. Phosphorylation strongly increases the affinity for substrates and increases the rate of nicotinate D-ribonucleotide production. Dephosphorylation regenerates the low-affinity form of the enzyme, leading to product release.

The catalysed reaction is nicotinate + 5-phospho-alpha-D-ribose 1-diphosphate + ATP + H2O = nicotinate beta-D-ribonucleotide + ADP + phosphate + diphosphate. The protein operates within cofactor biosynthesis; NAD(+) biosynthesis; nicotinate D-ribonucleotide from nicotinate: step 1/1. Functionally, catalyzes the synthesis of beta-nicotinate D-ribonucleotide from nicotinate and 5-phospho-D-ribose 1-phosphate at the expense of ATP. This Thermoplasma acidophilum (strain ATCC 25905 / DSM 1728 / JCM 9062 / NBRC 15155 / AMRC-C165) protein is Putative nicotinate phosphoribosyltransferase.